A 554-amino-acid polypeptide reads, in one-letter code: Formate--tetrahydrofolate ligase (554 aa).

An ATP-binding site is contributed by 64–71 (TPYGEGKT).

The protein belongs to the formate--tetrahydrofolate ligase family.

The enzyme catalyses (6S)-5,6,7,8-tetrahydrofolate + formate + ATP = (6R)-10-formyltetrahydrofolate + ADP + phosphate. Its pathway is one-carbon metabolism; tetrahydrofolate interconversion. The sequence is that of Formate--tetrahydrofolate ligase from Caldicellulosiruptor saccharolyticus (strain ATCC 43494 / DSM 8903 / Tp8T 6331).